A 244-amino-acid chain; its full sequence is Orotidine 5'-phosphate decarboxylase (244 aa).

Substrate-binding positions include aspartate 10, lysine 32, 59-68 (DLKLHDIPNT), threonine 122, arginine 184, glutamine 193, glycine 213, and arginine 214. Lysine 61 (proton donor) is an active-site residue.

Belongs to the OMP decarboxylase family. Type 1 subfamily. As to quaternary structure, homodimer.

It catalyses the reaction orotidine 5'-phosphate + H(+) = UMP + CO2. It participates in pyrimidine metabolism; UMP biosynthesis via de novo pathway; UMP from orotate: step 2/2. Functionally, catalyzes the decarboxylation of orotidine 5'-monophosphate (OMP) to uridine 5'-monophosphate (UMP). This chain is Orotidine 5'-phosphate decarboxylase, found in Bacillus caldolyticus.